The primary structure comprises 282 residues: Plant cysteine oxidase 3 (282 aa).

Positions 131, 133, and 202 each coordinate Fe cation.

This sequence belongs to the cysteine dioxygenase family. Fe(2+) is required as a cofactor.

It localises to the nucleus. It is found in the cytoplasm. It catalyses the reaction L-cysteine + O2 = 3-sulfino-L-alanine + H(+). Functionally, catalyzes the oxidation of N-terminal cysteine residues (N-Cys), thus preparing the protein for N-end rule pathway-mediated proteasomal degradation, upstream of the N-end rule enzymes ATE1, ATE2 and PRT6. Controls the preparation of the group VII ethylene response factor (ERF-VII) proteins for degradation via the 26S proteasome N-end rule pathway. Acts as an oxygen sensor that controls the stability of ERF-VII proteins, which are stabilized in flooding-induced hypoxia, and regulate transcriptional adaptation to these adverse conditions. The chain is Plant cysteine oxidase 3 from Arabidopsis thaliana (Mouse-ear cress).